The following is a 398-amino-acid chain: Histidinol-phosphate aminotransferase (398 aa).

The span at 1-10 (MTGQRATPQP) shows a compositional bias: polar residues. The disordered stretch occupies residues 1–30 (MTGQRATPQPTLDDLPLRDDLRGKSPYGAP). An N6-(pyridoxal phosphate)lysine modification is found at lysine 234.

This sequence belongs to the class-II pyridoxal-phosphate-dependent aminotransferase family. Histidinol-phosphate aminotransferase subfamily. Homodimer. It depends on pyridoxal 5'-phosphate as a cofactor.

It carries out the reaction L-histidinol phosphate + 2-oxoglutarate = 3-(imidazol-4-yl)-2-oxopropyl phosphate + L-glutamate. The protein operates within amino-acid biosynthesis; L-histidine biosynthesis; L-histidine from 5-phospho-alpha-D-ribose 1-diphosphate: step 7/9. In Mycobacterium avium (strain 104), this protein is Histidinol-phosphate aminotransferase.